A 432-amino-acid polypeptide reads, in one-letter code: Metacaspase-1 (432 aa).

2 stretches are compositionally biased toward low complexity: residues M1–G14 and Q29–Y59. The disordered stretch occupies residues M1 to Y70. The span at A60–Y70 shows a compositional bias: pro residues. Catalysis depends on residues H220 and C276.

The protein belongs to the peptidase C14B family.

It is found in the cytoplasm. Its subcellular location is the nucleus. Functionally, mediates cell death (apoptosis) triggered by oxygen stress, salt stress or chronological aging. Regulated cell death can prevent a release of toxic cellular components, thus avoiding necrotic collapse of the colony, and can also provide nutrients for healthy cells. Therefore, regulated cell death in yeast colonies can be as important for their development as are apoptosis and related processes that occur within metazoa. The polypeptide is Metacaspase-1 (MCA1) (Saccharomyces cerevisiae (strain YJM789) (Baker's yeast)).